Here is a 164-residue protein sequence, read N- to C-terminus: UBA-like domain-containing protein 2 (164 aa).

Serine 2 is modified (N-acetylserine). The segment at 144–164 (PPGASQGGAPQKAMAAMDGQR) is disordered.

It belongs to the UBALD family.

The chain is UBA-like domain-containing protein 2 (Ubald2) from Mus musculus (Mouse).